Reading from the N-terminus, the 938-residue chain is MMGPPRTPLSKIDKSNPYTPCGSKVTEEKILVTVRMRPLNWREHAKYDLIAWECPDDETIVFKNPNPDKAPTKYSFDKVFEPTCATQEVYEGGSRDVALSALAGTNATIFAYGQTSSGKTFTMRGVTESVVKDIYEHIRKTQERSFVLKVSALEIYNETVVDLLNRDTGPLRLLDDPEKGTIVENLVEEVVESRQHLQHLISICEDQRQVGETALNDKSSRSHQIIRLTIHSSLREIAGCVQSFMATLNLVDLAGSERAFQTNADGLRLKEGSHINRSLLTLTTVIRKLSSGRKRDHVPYRDSKLTRILQNSLGGNARTAIICTISPALSHVEQTKKTLSFAMSAKEVTNCAKVNMVVSEKKLLKHLQQKVAKLESELRSPEPSSSTCLKSLLIEKEMKIQQMESEMKELKRQRDIAQSELDLERKAKERKGSSECEPFSQVARCLSYHTKEESIPSKSVPSSRRTARDRRKDNVRQSLTSADPTALVQEIRLLEKHQKKLGEEANQALDLIHKEVTSHKLGDQQAAEKVAKMLSEIRDMQKSNLLTEEIVVGDKANLKEEINRLNSQEIAALEKKLECVQNTIDMLVSSFQTDEQTPDFRTQVKKKRLLPFGLSNSPNLQHMIRGPCSPLSGTENKDPESNVVSANSAPVSFGATPPKRDDNRCRTQSREGTPVSRQANSVDIKRMNRMYKNAAEENIRNIKSYVTGLKERVAKLQYQKQLLVCQVLELEANETGAASEYDATDESQMDWPLCFEEQRKQIIMLWHLCHISIIHRTQFYMLFKGDPADQIYMEVELRRLTWLEQHLAELGNASPALLGDEPASYVASSIRALKQEREYLAKRVNTKLGAEEREMLYLKWDVPPVGKQRRQQFINKLWTDPHNMQHVRESAEIVAKLVGFCDSGETIRKEMFELNFASPSDKKTWMMGWNFISNLLHL.

One can recognise a Kinesin motor domain in the interval 29-348 (KILVTVRMRP…LSFAMSAKEV (320 aa)). 113 to 120 (GQTSSGKT) is a binding site for ATP. Positions 357–431 (VVSEKKLLKH…DLERKAKERK (75 aa)) form a coiled coil. A disordered region spans residues 450-481 (TKEESIPSKSVPSSRRTARDRRKDNVRQSLTS). Residues 555-590 (KANLKEEINRLNSQEIAALEKKLECVQNTIDMLVSS) are a coiled coil. A disordered region spans residues 628–678 (CSPLSGTENKDPESNVVSANSAPVSFGATPPKRDDNRCRTQSREGTPVSRQ). Residues 641–652 (SNVVSANSAPVS) are compositionally biased toward low complexity. Positions 658-669 (PKRDDNRCRTQS) are enriched in basic and acidic residues.

The protein belongs to the TRAFAC class myosin-kinesin ATPase superfamily. Kinesin family. KIN-7 subfamily. In terms of assembly, interacts with ANP3. Interacts with TIO/FU. As to expression, expressed in roots, stems, flowers, pollen mother cells and embryos.

Its subcellular location is the cytoplasm. It localises to the cytoskeleton. It is found in the phragmoplast. Probable plus end-directed motor protein that functions in the NACK-PQR (ANP3-MKK6-MPK4) MAP kinase signaling pathway, which is essential for somatic cell cytokinesis, especially for the cell-plate formation and its expansion. May regulate the activity and the localization of ANP3, probably by association through the non-catalytic region of the kinase. Functionally redundant with NACK1 and essential to promote the progression of cytokinesis and for cellularization (formation of the cell plate) during microgametogenesis and megagametogenesis. The chain is Kinesin-like protein KIN-7B from Arabidopsis thaliana (Mouse-ear cress).